Consider the following 263-residue polypeptide: Palmitoyltransferase ZDHHC22 (263 aa).

Residues 1–9 (MLALRLLNV) lie on the Cytoplasmic side of the membrane. A helical transmembrane segment spans residues 10-30 (VAPAYFLCISLVTFVLQLFLF). Over 31–48 (LPSMREDPTATPLFSPAV) the chain is Lumenal. The chain crosses the membrane as a helical span at residues 49 to 69 (LHGALFLFLSANALGNYVLVI). Residues 70–125 (QNSPDDLGTCQGTMSQRPQCPPPSTHFCRVCSRVTLRHDHHCFFTGNCIGSRNMRN) lie on the Cytoplasmic side of the membrane. In terms of domain architecture, DHHC spans 91 to 131 (PPSTHFCRVCSRVTLRHDHHCFFTGNCIGSRNMRNFILFCL). Catalysis depends on Cys111, which acts as the S-palmitoyl cysteine intermediate. Transmembrane regions (helical) follow at residues 126–146 (FILF…AGVA) and 147–167 (YISA…TLLP). Residues 168–182 (TSISQFFSGAVLGSD) are Cytoplasmic-facing. A helical transmembrane segment spans residues 183–203 (MFVILMLYLWFAVGLACAGFC). Topologically, residues 204–263 (CHQLLLILRGQTRYQVRKGMAVRARPWRKNLQEVFGKRWLLGLLVPMFNVGTESSKQQDK) are lumenal.

It belongs to the DHHC palmitoyltransferase family. Interacts with CNN3.

The protein localises to the endoplasmic reticulum membrane. It localises to the golgi apparatus membrane. The enzyme catalyses L-cysteinyl-[protein] + hexadecanoyl-CoA = S-hexadecanoyl-L-cysteinyl-[protein] + CoA. Its function is as follows. Palmitoyltransferase that could catalyze the addition of palmitate onto various protein substrates and be involved in a variety of cellular processes. Catalyzes the palmitoylation of KCNMA1, regulating localization of KCNMA1 to the plasma membrane. Might also mediate palmitoylation of CNN3. The chain is Palmitoyltransferase ZDHHC22 from Mus musculus (Mouse).